The primary structure comprises 200 residues: uncharacterized protein (200 aa).

A helical transmembrane segment spans residues 104-124 (SNLLICFLFLCGLYHISVFTG).

The protein localises to the membrane. This is an uncharacterized protein from Escherichia coli (strain K12).